Here is a 200-residue protein sequence, read N- to C-terminus: 3-isopropylmalate dehydratase small subunit (200 aa).

Belongs to the LeuD family. LeuD type 1 subfamily. In terms of assembly, heterodimer of LeuC and LeuD.

The catalysed reaction is (2R,3S)-3-isopropylmalate = (2S)-2-isopropylmalate. Its pathway is amino-acid biosynthesis; L-leucine biosynthesis; L-leucine from 3-methyl-2-oxobutanoate: step 2/4. Functionally, catalyzes the isomerization between 2-isopropylmalate and 3-isopropylmalate, via the formation of 2-isopropylmaleate. This Vibrio atlanticus (strain LGP32) (Vibrio splendidus (strain Mel32)) protein is 3-isopropylmalate dehydratase small subunit.